Here is a 133-residue protein sequence, read N- to C-terminus: Hemiptericin (133 aa).

In terms of biological role, antibacterial peptide. Affects Gram-negative bacteria. The sequence is that of Hemiptericin from Pyrrhocoris apterus (Sap sucking bug).